Consider the following 503-residue polypeptide: Protein O-glucosyltransferase 3 (503 aa).

Residues Met1 to Gly19 form the signal peptide. A Filamin repeat occupies Gly19–Gly129. Asn56 and Asn302 each carry an N-linked (GlcNAc...) asparagine glycan. Positions Arg500–Leu503 match the Prevents secretion from ER motif.

It belongs to the KDELC family.

The protein resides in the endoplasmic reticulum lumen. It catalyses the reaction L-seryl-[EGF-like domain protein] + UDP-alpha-D-glucose = 3-O-(beta-D-glucosyl)-L-seryl-[EGF-like domain protein] + UDP + H(+). The enzyme catalyses L-seryl-[EGF-like domain protein] + UDP-alpha-D-xylose = 3-O-(beta-D-xylosyl)-L-seryl-[EGF-like domain protein] + UDP + H(+). It functions in the pathway protein modification; protein glycosylation. In terms of biological role, protein glucosyltransferase that catalyzes the transfer of glucose from UDP-glucose to a serine residue within the consensus sequence peptide C-X-N-T-X-G-S-F-X-C. Can also catalyze the transfer of xylose from UDP-xylose but less efficiently. Specifically targets extracellular EGF repeats of proteins such as NOTCH1, NOTCH3, FBN1, FBN2 and LTBP1. May regulate the transport of NOTCH1 and NOTCH3 to the plasma membrane and thereby the Notch signaling pathway. The polypeptide is Protein O-glucosyltransferase 3 (Poglut3) (Mus musculus (Mouse)).